Consider the following 87-residue polypeptide: DNA-directed RNA polymerase subunit omega (87 aa).

The protein belongs to the RNA polymerase subunit omega family. In terms of assembly, the RNAP catalytic core consists of 2 alpha, 1 beta, 1 beta' and 1 omega subunit. When a sigma factor is associated with the core the holoenzyme is formed, which can initiate transcription.

It carries out the reaction RNA(n) + a ribonucleoside 5'-triphosphate = RNA(n+1) + diphosphate. Functionally, promotes RNA polymerase assembly. Latches the N- and C-terminal regions of the beta' subunit thereby facilitating its interaction with the beta and alpha subunits. The sequence is that of DNA-directed RNA polymerase subunit omega from Pseudomonas savastanoi pv. phaseolicola (strain 1448A / Race 6) (Pseudomonas syringae pv. phaseolicola (strain 1448A / Race 6)).